A 467-amino-acid chain; its full sequence is Indoleacetamide hydrolase (467 aa).

Residues Lys-74 and Ser-149 each act as charge relay system in the active site. Catalysis depends on Ser-173, which acts as the Acyl-ester intermediate.

It belongs to the amidase family.

The protein operates within plant hormone metabolism; auxin biosynthesis. Hydrolyzes indole-3-acetamide (IAM) into indole-3-acetic acid (IAA). The polypeptide is Indoleacetamide hydrolase (TA-iaaH) (Agrobacterium vitis (Rhizobium vitis)).